The sequence spans 23 residues: Aurein-4.3 (23 aa).

It belongs to the frog skin active peptide (FSAP) family. Aurein subfamily. In terms of tissue distribution, expressed by the skin dorsal glands.

The protein resides in the secreted. In terms of biological role, has no antimicrobial or anticancer activity. The sequence is that of Aurein-4.3 from Ranoidea aurea (Green and golden bell frog).